We begin with the raw amino-acid sequence, 171 residues long: Peptide methionine sulfoxide reductase MsrA (171 aa).

The active site involves Cys13.

Belongs to the MsrA Met sulfoxide reductase family.

It catalyses the reaction L-methionyl-[protein] + [thioredoxin]-disulfide + H2O = L-methionyl-(S)-S-oxide-[protein] + [thioredoxin]-dithiol. The catalysed reaction is [thioredoxin]-disulfide + L-methionine + H2O = L-methionine (S)-S-oxide + [thioredoxin]-dithiol. Its function is as follows. Has an important function as a repair enzyme for proteins that have been inactivated by oxidation. Catalyzes the reversible oxidation-reduction of methionine sulfoxide in proteins to methionine. In Mycobacterium sp. (strain JLS), this protein is Peptide methionine sulfoxide reductase MsrA.